The primary structure comprises 456 residues: Adenylosuccinate lyase (456 aa).

N(6)-(1,2-dicarboxyethyl)-AMP-binding positions include 15–16, 90–92, and 122–123; these read RY, NHD, and TS. The active-site Proton donor/acceptor is the His171. Residue Gln247 participates in N(6)-(1,2-dicarboxyethyl)-AMP binding. Ser295 acts as the Proton donor/acceptor in catalysis. N(6)-(1,2-dicarboxyethyl)-AMP is bound by residues Ser296, 301-303, Asn309, Arg335, and 340-344; these read KIN and STVLR.

It belongs to the lyase 1 family. Adenylosuccinate lyase subfamily. As to quaternary structure, homotetramer. Residues from neighboring subunits contribute catalytic and substrate-binding residues to each active site.

It catalyses the reaction N(6)-(1,2-dicarboxyethyl)-AMP = fumarate + AMP. The catalysed reaction is (2S)-2-[5-amino-1-(5-phospho-beta-D-ribosyl)imidazole-4-carboxamido]succinate = 5-amino-1-(5-phospho-beta-D-ribosyl)imidazole-4-carboxamide + fumarate. The protein operates within purine metabolism; AMP biosynthesis via de novo pathway; AMP from IMP: step 2/2. It functions in the pathway purine metabolism; IMP biosynthesis via de novo pathway; 5-amino-1-(5-phospho-D-ribosyl)imidazole-4-carboxamide from 5-amino-1-(5-phospho-D-ribosyl)imidazole-4-carboxylate: step 2/2. Its function is as follows. Catalyzes two reactions in de novo purine nucleotide biosynthesis. Catalyzes the breakdown of 5-aminoimidazole- (N-succinylocarboxamide) ribotide (SAICAR or 2-[5-amino-1-(5-phospho-beta-D-ribosyl)imidazole-4-carboxamido]succinate) to 5-aminoimidazole-4-carboxamide ribotide (AICAR or 5-amino-1-(5-phospho-beta-D-ribosyl)imidazole-4-carboxamide) and fumarate, and of adenylosuccinate (ADS or N(6)-(1,2-dicarboxyethyl)-AMP) to adenosine monophosphate (AMP) and fumarate. The protein is Adenylosuccinate lyase (purB) of Buchnera aphidicola subsp. Schizaphis graminum (strain Sg).